Consider the following 150-residue polypeptide: Ribonuclease H (150 aa).

Residues 1-141 (MKSIEVHTDG…VDVLARNQAT (141 aa)) form the RNase H type-1 domain. D9, E47, D69, and D133 together coordinate Mg(2+).

Belongs to the RNase H family. As to quaternary structure, monomer. The cofactor is Mg(2+).

Its subcellular location is the cytoplasm. The catalysed reaction is Endonucleolytic cleavage to 5'-phosphomonoester.. In terms of biological role, endonuclease that specifically degrades the RNA of RNA-DNA hybrids. The sequence is that of Ribonuclease H from Xanthomonas oryzae pv. oryzae (strain MAFF 311018).